A 408-amino-acid chain; its full sequence is PTI1-like tyrosine-protein kinase 3 (408 aa).

A compositionally biased stretch (basic and acidic residues) spans 59–76 (SSENEHLRSPKHHNDFGH). The interval 59-91 (SSENEHLRSPKHHNDFGHHTRKPQAAVKPDALK) is disordered. One can recognise a Protein kinase domain in the interval 113–395 (FGSKSLIGEG…IVVKALQPLL (283 aa)). Residues 119–127 (IGEGSYGRA) and K141 each bind ATP. The active-site Proton acceptor is the D245.

It belongs to the protein kinase superfamily. Tyr protein kinase family. Interacts with OXI1. Phosphorylated by OXI1.

The protein resides in the cell membrane. The catalysed reaction is L-tyrosyl-[protein] + ATP = O-phospho-L-tyrosyl-[protein] + ADP + H(+). This is PTI1-like tyrosine-protein kinase 3 (PTI13) from Arabidopsis thaliana (Mouse-ear cress).